The chain runs to 500 residues: Cytochrome P450 2C11 (500 aa).

C435 is a heme binding site.

The protein belongs to the cytochrome P450 family. Heme serves as cofactor. As to expression, liver and kidney; male-specific.

It is found in the endoplasmic reticulum membrane. The protein resides in the microsome membrane. It carries out the reaction an organic molecule + reduced [NADPH--hemoprotein reductase] + O2 = an alcohol + oxidized [NADPH--hemoprotein reductase] + H2O + H(+). It catalyses the reaction testosterone + reduced [NADPH--hemoprotein reductase] + O2 = 2alpha,17beta-dihydroxyandrost-4-en-3-one + oxidized [NADPH--hemoprotein reductase] + H2O + H(+). The catalysed reaction is testosterone + reduced [NADPH--hemoprotein reductase] + O2 = 16alpha,17beta-dihydroxyandrost-4-en-3-one + oxidized [NADPH--hemoprotein reductase] + H2O + H(+). The enzyme catalyses (5Z,8Z,11Z,14Z)-eicosatetraenoate + reduced [NADPH--hemoprotein reductase] + O2 = (8R,9S)-epoxy-(5Z,11Z,14Z)-eicosatrienoate + oxidized [NADPH--hemoprotein reductase] + H2O + H(+). It carries out the reaction (5Z,8Z,11Z,14Z)-eicosatetraenoate + reduced [NADPH--hemoprotein reductase] + O2 = (8S,9R)-epoxy-(5Z,11Z,14Z)-eicosatrienoate + oxidized [NADPH--hemoprotein reductase] + H2O + H(+). It catalyses the reaction (5Z,8Z,11Z,14Z)-eicosatetraenoate + reduced [NADPH--hemoprotein reductase] + O2 = (11R,12S)-epoxy-(5Z,8Z,14Z)-eicosatrienoate + oxidized [NADPH--hemoprotein reductase] + H2O + H(+). The catalysed reaction is (5Z,8Z,11Z,14Z)-eicosatetraenoate + reduced [NADPH--hemoprotein reductase] + O2 = (11S,12R)-epoxy-(5Z,8Z,14Z)-eicosatrienoate + oxidized [NADPH--hemoprotein reductase] + H2O + H(+). The enzyme catalyses (5Z,8Z,11Z,14Z)-eicosatetraenoate + reduced [NADPH--hemoprotein reductase] + O2 = (14R,15S)-epoxy-(5Z,8Z,11Z)-eicosatrienoate + oxidized [NADPH--hemoprotein reductase] + H2O + H(+). It carries out the reaction (5Z,8Z,11Z,14Z)-eicosatetraenoate + reduced [NADPH--hemoprotein reductase] + O2 = (14S,15R)-epoxy-(5Z,8Z,11Z)-eicosatrienoate + oxidized [NADPH--hemoprotein reductase] + H2O + H(+). It catalyses the reaction (5Z,8Z,11Z,14Z,17Z)-eicosapentaenoate + reduced [NADPH--hemoprotein reductase] + O2 = 8,9-epoxy-(5Z,11Z,14Z,17Z)-eicosatetraenoate + oxidized [NADPH--hemoprotein reductase] + H2O + H(+). The catalysed reaction is (5Z,8Z,11Z,14Z,17Z)-eicosapentaenoate + reduced [NADPH--hemoprotein reductase] + O2 = 11,12-epoxy-(5Z,8Z,14Z,17Z)-eicosatetraenoate + oxidized [NADPH--hemoprotein reductase] + H2O + H(+). The enzyme catalyses (5Z,8Z,11Z,14Z,17Z)-eicosapentaenoate + reduced [NADPH--hemoprotein reductase] + O2 = 14,15-epoxy-(5Z,8Z,11Z,17Z)-eicosatetraenoate + oxidized [NADPH--hemoprotein reductase] + H2O + H(+). It carries out the reaction (5Z,8Z,11Z,14Z,17Z)-eicosapentaenoate + reduced [NADPH--hemoprotein reductase] + O2 = (17S,18R)-epoxy-(5Z,8Z,11Z,14Z)-eicosatetraenoate + oxidized [NADPH--hemoprotein reductase] + H2O + H(+). It catalyses the reaction (5Z,8Z,11Z,14Z,17Z)-eicosapentaenoate + reduced [NADPH--hemoprotein reductase] + O2 = (17R,18S)-epoxy-(5Z,8Z,11Z,14Z)-eicosatetraenoate + oxidized [NADPH--hemoprotein reductase] + H2O + H(+). Its pathway is lipid metabolism; arachidonate metabolism. It functions in the pathway steroid metabolism. Functionally, a cytochrome P450 monooxygenase involved in the metabolism of steroid hormones and fatty acids. Catalyzes the hydroxylation of carbon-hydrogen bonds. Metabolizes testosterone to 2alpha- and 16alpha-hydroxytestosterone. Catalyzes the epoxidation of double bonds of polyunsaturated fatty acids (PUFAs). Converts arachidonic acid (ARA, C20:4(n-6)) primarily to epoxyeicosatrienoic acid (EET) regioisomers, 8,9-, 11,12-, and 14,15-EET, with both R,S and S,R stereochemistry. Preferentially produces 11R,12S-EET enantiomer. To a lesser extent, catalyzes the hydroxylation of arachidonic acid producing hydroxyeicosatetraenoates (HETEs). Metabolizes eicosapentaenoic acid (EPA, C20:5(n-3)) to epoxyeicosatetraenoic acid (EETeTr) regioisomers, 8,9-, 11,12-, 14,15-, and 17,18-EETeTr, preferentially producing 17R,18S-EETeTr enantiomer. Mechanistically, uses molecular oxygen inserting one oxygen atom into a substrate, and reducing the second into a water molecule, with two electrons provided by NADPH via cytochrome P450 reductase (NADPH--hemoprotein reductase). This chain is Cytochrome P450 2C11 (Cyp2c11), found in Rattus norvegicus (Rat).